A 630-amino-acid polypeptide reads, in one-letter code: tRNA uridine 5-carboxymethylaminomethyl modification enzyme MnmG (630 aa).

13–18 is an FAD binding site; sequence GGGHAG. Position 273 to 287 (273 to 287) interacts with NAD(+); sequence GPRYCPSIEDKVNRF.

Belongs to the MnmG family. Homodimer. Heterotetramer of two MnmE and two MnmG subunits. FAD serves as cofactor.

Its subcellular location is the cytoplasm. NAD-binding protein involved in the addition of a carboxymethylaminomethyl (cmnm) group at the wobble position (U34) of certain tRNAs, forming tRNA-cmnm(5)s(2)U34. In Saccharophagus degradans (strain 2-40 / ATCC 43961 / DSM 17024), this protein is tRNA uridine 5-carboxymethylaminomethyl modification enzyme MnmG.